The sequence spans 729 residues: Polyribonucleotide nucleotidyltransferase (729 aa).

Aspartate 485 and aspartate 491 together coordinate Mg(2+). A KH domain is found at 552-611 (PRITTMKVAEDKIRTIIGKGGATIKGLIESTGVSIDIDDSGVIQLFSPDKMALEEAQKQI). Residues 621–689 (GQTYQGKVSK…KQGRVKLEWK (69 aa)) enclose the S1 motif domain. The segment at 710-729 (TMEEQSEEINSGNKISEEEE) is disordered.

It belongs to the polyribonucleotide nucleotidyltransferase family. Component of the RNA degradosome, which is a multiprotein complex involved in RNA processing and mRNA degradation. Mg(2+) is required as a cofactor.

The protein localises to the cytoplasm. It catalyses the reaction RNA(n+1) + phosphate = RNA(n) + a ribonucleoside 5'-diphosphate. Functionally, involved in mRNA degradation. Catalyzes the phosphorolysis of single-stranded polyribonucleotides processively in the 3'- to 5'-direction. The chain is Polyribonucleotide nucleotidyltransferase from Legionella pneumophila (strain Paris).